The following is a 390-amino-acid chain: Phosphoglycerate kinase (390 aa).

Substrate-binding positions include 21–23 (DLN), arginine 36, 59–62 (HLGR), arginine 112, and arginine 145. Residues lysine 196, glutamate 317, and 343–346 (GGDT) contribute to the ATP site.

The protein belongs to the phosphoglycerate kinase family. Monomer.

The protein resides in the cytoplasm. The catalysed reaction is (2R)-3-phosphoglycerate + ATP = (2R)-3-phospho-glyceroyl phosphate + ADP. It functions in the pathway carbohydrate degradation; glycolysis; pyruvate from D-glyceraldehyde 3-phosphate: step 2/5. The protein is Phosphoglycerate kinase of Cellvibrio japonicus (strain Ueda107) (Pseudomonas fluorescens subsp. cellulosa).